Here is an 870-residue protein sequence, read N- to C-terminus: Ubiquitin-protein ligase E3A (870 aa).

Phosphoserine is present on serine 8. A C4-type; atypical zinc finger spans residues 42–81 (CGNEACTNEFCASCPTFLRMDNNAAAIKALELYKINAKLC). A compositionally biased stretch (basic and acidic residues) spans 171-180 (EELKSLQEKD). The tract at residues 171-223 (EELKSLQEKDEDKDEDEKEKAACSAAAMEEDSEASSSRMGDSSQGDNNVQKLG) is disordered. Over residues 208 to 220 (RMGDSSQGDNNVQ) the composition is skewed to polar residues. Serine 213 carries the post-translational modification Phosphoserine. An HECT domain is found at 542–870 (NPADLKKQLY…ITYAKGFGML (329 aa)). At tyrosine 654 the chain carries Phosphotyrosine; by ABL1. The active-site Glycyl thioester intermediate is cysteine 838.

The active form is probably a homotrimer. Binds UBQLN1 and UBQLN2. Interacts with the 26S proteasome. Interacts with BPY2. Interacts with HIF1AN, MAPK6 and NEURL4; interaction with MAPK6 may be mediated by NEURL4. Interacts with the proteasomal subunit PSMD4. Interacts with BMAL1. Interacts with ARC. Interacts with ESR1 and WBP2. In terms of processing, phosphorylation at Tyr-654 by ABL1 impairs E3 ligase activity. Widely expressed. Most abundant in brain, heart and thymus.

It is found in the cytoplasm. The protein resides in the nucleus. It carries out the reaction S-ubiquitinyl-[E2 ubiquitin-conjugating enzyme]-L-cysteine + [acceptor protein]-L-lysine = [E2 ubiquitin-conjugating enzyme]-L-cysteine + N(6)-ubiquitinyl-[acceptor protein]-L-lysine.. Its pathway is protein modification; protein ubiquitination. In terms of biological role, E3 ubiquitin-protein ligase which accepts ubiquitin from an E2 ubiquitin-conjugating enzyme in the form of a thioester and transfers it to its substrates. Several substrates have been identified including the BMAL1, ARC, LAMTOR1, RAD23A and RAD23B, MCM7 (which is involved in DNA replication), annexin A1, the PML tumor suppressor, and the cell cycle regulator CDKN1B. Additionally, may function as a cellular quality control ubiquitin ligase by helping the degradation of the cytoplasmic misfolded proteins. Finally, UBE3A also promotes its own degradation in vivo. Plays an important role in the regulation of the circadian clock: involved in the ubiquitination of the core clock component BMAL1, leading to its proteasomal degradation. Acts as a regulator of synaptic development by mediating ubiquitination and degradation of ARC. Required for synaptic remodeling in neurons by mediating ubiquitination and degradation of LAMTOR1, thereby limiting mTORC1 signaling and activity-dependent synaptic remodeling. Synergizes with WBP2 in enhancing PGR activity. This Mus musculus (Mouse) protein is Ubiquitin-protein ligase E3A.